The chain runs to 113 residues: Biotrophy-associated secreted protein 3 (113 aa).

An N-terminal signal peptide occupies residues 1-20 (MQFSTVSFAIFAILPAMVAA).

Its subcellular location is the secreted. In terms of biological role, secreted effector involved in biotrophic colonization of plant cells. This is Biotrophy-associated secreted protein 3 from Pyricularia oryzae (strain 70-15 / ATCC MYA-4617 / FGSC 8958) (Rice blast fungus).